A 384-amino-acid polypeptide reads, in one-letter code: Histidinol-phosphate aminotransferase 1 (384 aa).

At Lys233 the chain carries N6-(pyridoxal phosphate)lysine.

Belongs to the class-II pyridoxal-phosphate-dependent aminotransferase family. Histidinol-phosphate aminotransferase subfamily. In terms of assembly, homodimer. Pyridoxal 5'-phosphate serves as cofactor.

It catalyses the reaction L-histidinol phosphate + 2-oxoglutarate = 3-(imidazol-4-yl)-2-oxopropyl phosphate + L-glutamate. The protein operates within amino-acid biosynthesis; L-histidine biosynthesis; L-histidine from 5-phospho-alpha-D-ribose 1-diphosphate: step 7/9. This chain is Histidinol-phosphate aminotransferase 1, found in Thiobacillus denitrificans (strain ATCC 25259 / T1).